The chain runs to 132 residues: Small ribosomal subunit protein uS8 (132 aa).

Belongs to the universal ribosomal protein uS8 family. As to quaternary structure, part of the 30S ribosomal subunit. Contacts proteins S5 and S12.

In terms of biological role, one of the primary rRNA binding proteins, it binds directly to 16S rRNA central domain where it helps coordinate assembly of the platform of the 30S subunit. The sequence is that of Small ribosomal subunit protein uS8 from Mycobacterium sp. (strain KMS).